Reading from the N-terminus, the 626-residue chain is Hemocyanin AA6 chain (626 aa).

Cu cation is bound by residues histidine 170, histidine 174, histidine 201, histidine 321, histidine 325, and histidine 361. Position 374 is a phosphoserine (serine 374).

This sequence belongs to the tyrosinase family. Hemocyanin subfamily. In terms of assembly, scorpion hemocyanin is a 24-chain polymer with 8 different chains identified, assembled in hexameric substructures. Three disulfide bonds are present. In terms of tissue distribution, hemolymph.

The protein localises to the secreted. The protein resides in the extracellular space. In terms of biological role, hemocyanins are copper-containing oxygen carriers occurring freely dissolved in the hemolymph of many mollusks and arthropods. The chain is Hemocyanin AA6 chain from Androctonus australis (Sahara scorpion).